A 442-amino-acid polypeptide reads, in one-letter code: Cytochrome c biogenesis protein CcsB (442 aa).

3 helical membrane passes run 17–37, 76–96, and 162–182; these read LRLA…GTVI, TPWY…CTLT, and LGPI…ILGA.

This sequence belongs to the Ccs1/CcsB family. May interact with CcsA.

It localises to the cellular thylakoid membrane. Required during biogenesis of c-type cytochromes (cytochrome c6 and cytochrome f) at the step of heme attachment. This chain is Cytochrome c biogenesis protein CcsB, found in Thermosynechococcus vestitus (strain NIES-2133 / IAM M-273 / BP-1).